A 318-amino-acid polypeptide reads, in one-letter code: tRNA dimethylallyltransferase (318 aa).

16–23 lines the ATP pocket; the sequence is GPTASGKS. A substrate-binding site is contributed by 18–23; it reads TASGKS. Interaction with substrate tRNA stretches follow at residues 41–44 and 165–169; these read DSRQ and QRLIR.

The protein belongs to the IPP transferase family. Monomer. Mg(2+) serves as cofactor.

It catalyses the reaction adenosine(37) in tRNA + dimethylallyl diphosphate = N(6)-dimethylallyladenosine(37) in tRNA + diphosphate. In terms of biological role, catalyzes the transfer of a dimethylallyl group onto the adenine at position 37 in tRNAs that read codons beginning with uridine, leading to the formation of N6-(dimethylallyl)adenosine (i(6)A). The polypeptide is tRNA dimethylallyltransferase (Pelodictyon phaeoclathratiforme (strain DSM 5477 / BU-1)).